The primary structure comprises 505 residues: AMP phosphorylase (505 aa).

Residues Gly170, 196–201, and Thr205 each bind AMP; that span reads SRAITS. The Proton donor role is filled by Asp258. AMP-binding residues include Ser266 and Lys290.

Belongs to the thymidine/pyrimidine-nucleoside phosphorylase family. Type 2 subfamily.

The catalysed reaction is AMP + phosphate = alpha-D-ribose 1,5-bisphosphate + adenine. The enzyme catalyses CMP + phosphate = cytosine + alpha-D-ribose 1,5-bisphosphate. It carries out the reaction UMP + phosphate = alpha-D-ribose 1,5-bisphosphate + uracil. In terms of biological role, catalyzes the conversion of AMP and phosphate to adenine and ribose 1,5-bisphosphate (R15P). Exhibits phosphorylase activity toward CMP and UMP in addition to AMP. Functions in an archaeal AMP degradation pathway, together with R15P isomerase and RubisCO. In Methanococcus maripaludis (strain C6 / ATCC BAA-1332), this protein is AMP phosphorylase.